A 161-amino-acid chain; its full sequence is Peroxynitrite isomerase 2 (161 aa).

Residues 17 to 23 (GTWAGQG) carry the GXWXGXG motif. Histidine 152 lines the heme b pocket.

Belongs to the nitrobindin family. Homodimer. Heme b serves as cofactor.

The enzyme catalyses peroxynitrite = nitrate. It participates in nitrogen metabolism. In terms of biological role, heme-binding protein able to scavenge peroxynitrite and to protect free L-tyrosine against peroxynitrite-mediated nitration, by acting as a peroxynitrite isomerase that converts peroxynitrite to nitrate. Therefore, this protein likely plays a role in peroxynitrite sensing and in the detoxification of reactive nitrogen and oxygen species (RNS and ROS, respectively). Is able to bind nitric oxide (NO) in vitro, but may act as a sensor of peroxynitrite levels in vivo. This is Peroxynitrite isomerase 2 from Mycobacterium marinum (strain ATCC BAA-535 / M).